A 339-amino-acid polypeptide reads, in one-letter code: Heat-inducible transcription repressor HrcA (339 aa).

Belongs to the HrcA family.

Functionally, negative regulator of class I heat shock genes (grpE-dnaK-dnaJ and groELS operons). Prevents heat-shock induction of these operons. This is Heat-inducible transcription repressor HrcA from Clostridioides difficile (strain 630) (Peptoclostridium difficile).